Reading from the N-terminus, the 126-residue chain is uncharacterized protein (126 aa).

Residues 83–126 (VPPPLDRSHESPEEFFPPQNRNRGGGPKAQIQRHPPEALEKTTH) form a disordered region. Over residues 116 to 126 (HPPEALEKTTH) the composition is skewed to basic and acidic residues.

This is an uncharacterized protein from Galliformes (FAdV-1).